Consider the following 295-residue polypeptide: Nicotinate-nucleotide pyrophosphorylase [carboxylating] (295 aa).

Substrate-binding positions include R107, 142–144, R166, K176, E206, D227, and 256–258; these read TRK and SGG.

It belongs to the NadC/ModD family. As to quaternary structure, hexamer formed by 3 homodimers.

Its subcellular location is the cytoplasm. The protein localises to the nucleus. It carries out the reaction nicotinate beta-D-ribonucleotide + CO2 + diphosphate = quinolinate + 5-phospho-alpha-D-ribose 1-diphosphate + 2 H(+). The protein operates within cofactor biosynthesis; NAD(+) biosynthesis; nicotinate D-ribonucleotide from quinolinate: step 1/1. In terms of biological role, involved in the catabolism of quinolinic acid (QA). The chain is Nicotinate-nucleotide pyrophosphorylase [carboxylating] (BNA6) from Saccharomyces cerevisiae (strain ATCC 204508 / S288c) (Baker's yeast).